A 223-amino-acid polypeptide reads, in one-letter code: Golgi SNAP receptor complex member 1 (223 aa).

Ser2 carries the post-translational modification N-acetylserine. The Cytoplasmic segment spans residues Ser2–Asn204. Ser164 is subject to Phosphoserine. Residues Ala205 to Thr222 form a helical; Anchor for type IV membrane protein membrane-spanning segment. A topological domain (vesicular) is located at residue Trp223.

It belongs to the GOSR1 family. In terms of assembly, component of several multiprotein Golgi SNARE complexes. Identified in a Golgi SNARE complex consisting of t-SNARES SED5, YKT6, and the v-SNARE SFT1. Interacts with BET1. Interacts with BOS1. Interacts with SEC22. Interacts with PEP12. Interacts with self.

Its subcellular location is the golgi apparatus membrane. In terms of biological role, involved in transport from the ER to the Golgi apparatus as well as in intra-Golgi transport. It belongs to a super-family of proteins called t-SNAREs or soluble NSF (N-ethylmaleimide-sensitive factor) attachment protein receptor. Rescues alpha-factor maturation defects. In Saccharomyces cerevisiae (strain ATCC 204508 / S288c) (Baker's yeast), this protein is Golgi SNAP receptor complex member 1 (GOS1).